The following is a 332-amino-acid chain: Tetraacyldisaccharide 4'-kinase (332 aa).

Position 52–59 (52–59) interacts with ATP; that stretch reads TLGGAGKT.

This sequence belongs to the LpxK family.

The catalysed reaction is a lipid A disaccharide + ATP = a lipid IVA + ADP + H(+). It functions in the pathway glycolipid biosynthesis; lipid IV(A) biosynthesis; lipid IV(A) from (3R)-3-hydroxytetradecanoyl-[acyl-carrier-protein] and UDP-N-acetyl-alpha-D-glucosamine: step 6/6. Its function is as follows. Transfers the gamma-phosphate of ATP to the 4'-position of a tetraacyldisaccharide 1-phosphate intermediate (termed DS-1-P) to form tetraacyldisaccharide 1,4'-bis-phosphate (lipid IVA). This Methylobacterium sp. (strain 4-46) protein is Tetraacyldisaccharide 4'-kinase.